The sequence spans 771 residues: DNA polymerase 1 (771 aa).

Belongs to the DNA polymerase type-B family.

It catalyses the reaction DNA(n) + a 2'-deoxyribonucleoside 5'-triphosphate = DNA(n+1) + diphosphate. The chain is DNA polymerase 1 (polI) from Pyrococcus abyssi.